A 1475-amino-acid polypeptide reads, in one-letter code: ABC transporter G family member 15 (1475 aa).

The span at 1–10 shows a compositional bias: basic and acidic residues; sequence MDSNENKKNG. Disordered regions lie at residues 1-40 and 75-94; these read MDSN…EEHI and NIKN…GGGA. Over residues 17-34 the composition is skewed to low complexity; it reads NIINNNNDNNNNNDNNNN. The stretch at 25–67 forms a coiled coil; it reads NNNNNDNNNNSTEEHIESVEQSIKEFNNVANELETEFRDYLVE. The 250-residue stretch at 155–404 folds into the ABC transporter 1 domain; it reads LNVKNWFKKS…FIDMGFECEP (250 aa). One can recognise an ABC transmembrane type-2 1 domain in the interval 507 to 753; the sequence is WGDKFSLISR…FTGERYLEKS (247 aa). The next 5 helical transmembrane spans lie at 596–616, 623–641, 653–673, 680–699, and 770–790; these read IPII…MFGL, FFIN…NNLY, IGQN…SYII, VWFG…RALM, and ICIV…VLNI. An ABC transporter 2 domain is found at 842 to 1087; that stretch reads FTWQHMYYSV…LTSYFQRHGV (246 aa). 879-886 lines the ATP pocket; it reads GSSGAGKT. A run of 6 helical transmembrane segments spans residues 1180-1200, 1216-1236, 1256-1276, 1293-1313, 1323-1343, and 1449-1469; these read GYSY…GWTF, FIFN…PQFI, FALS…TIFF, FFFW…GQAI, ALNL…VLVI, and FGII…FVFL. An ABC transmembrane type-2 2 domain is found at 1180–1404; that stretch reads GYSYGTFIQS…TCSDYAFEFL (225 aa).

Belongs to the ABC transporter superfamily. ABCG family. PDR (TC 3.A.1.205) subfamily.

Its subcellular location is the membrane. This Dictyostelium discoideum (Social amoeba) protein is ABC transporter G family member 15 (abcG15).